The following is a 161-amino-acid chain: Interleukin-17F (161 aa).

The signal sequence occupies residues 1–28 (MKGSCETTMVKSLLLLMLGFAIISSGAA). Asparagine 83 is a glycosylation site (N-linked (GlcNAc...) asparagine). Disulfide bonds link cysteine 100–cysteine 150 and cysteine 105–cysteine 152.

Belongs to the IL-17 family. As to quaternary structure, homodimer; disulfide-linked. Heterodimer with IL17A (IL17A-IL17F). Forms complexes with IL17RA and IL17RC receptors with 2:1 binding stoichiometry: two receptor chains for one interleukin molecule. IL17F homodimer forms predominantly complexes with IL17RC homodimer, whereas IL17A-IL17F favors complexes with IL17RA-IL17RC. IL17RA and IL17RC chains cannot distinguish between IL17A and IL17F molecules, potentially enabling the formation of topologically distinct complexes.

It localises to the secreted. Effector cytokine of innate and adaptive immune system involved in antimicrobial host defense and maintenance of tissue integrity. IL17A-IL17F signals via IL17RA-IL17RC heterodimeric receptor complex, triggering homotypic interaction of IL17RA and IL17RC chains with TRAF3IP2 adapter through SEFIR domains. This leads to downstream TRAF6-mediated activation of NF-kappa-B and MAPkinase pathways ultimately resulting in transcriptional activation of cytokines, chemokines, antimicrobial peptides and matrix metalloproteinases, with potential strong immune inflammation. IL17A-IL17F is primarily involved in host defense against extracellular bacteria and fungi by inducing neutrophilic inflammation. As signature effector cytokine of T-helper 17 cells (Th17), primarily induces neutrophil activation and recruitment at infection and inflammatory sites. Stimulates the production of antimicrobial beta-defensins DEFB1, DEFB103A, and DEFB104A by mucosal epithelial cells, limiting the entry of microbes through the epithelial barriers. IL17F homodimer can signal via IL17RC homodimeric receptor complex, triggering downstream activation of TRAF6 and NF-kappa-B signaling pathway. Via IL17RC induces transcriptional activation of IL33, a potent cytokine that stimulates group 2 innate lymphoid cells and adaptive T-helper 2 cells involved in pulmonary allergic response to fungi. Likely via IL17RC, promotes sympathetic innervation of peripheral organs by coordinating the communication between gamma-delta T cells and parenchymal cells. Stimulates sympathetic innervation of thermogenic adipose tissue by driving TGFB1 expression. Regulates the composition of intestinal microbiota and immune tolerance by inducing antimicrobial proteins that specifically control the growth of commensal Firmicutes and Bacteroidetes. This is Interleukin-17F (Il17f) from Rattus norvegicus (Rat).